We begin with the raw amino-acid sequence, 54 residues long: UPF0434 protein BCI_0256 (54 aa).

The protein belongs to the UPF0434 family.

The protein is UPF0434 protein BCI_0256 of Baumannia cicadellinicola subsp. Homalodisca coagulata.